The following is a 578-amino-acid chain: MACGFRRAIACQLSRVLNLPPENLITSISAVPISQKEEVADFQLSVDSLLEKDNDHSRPDIQVQAKRLAEKLRCDTVVSEISTGQRTVNFKINRELLTKTVLQQVIEDGSKYGLKSELFSGLPQKKIVVEFSSPNVAKKFHVGHLRSTIIGNFIANLKEALGHQVIRINYLGDWGMQFGLLGTGFQLFGYEEKLQSNPLQHLFEVYVQVNKEAADDKSVAKAAQEFFQRLELGDVQALSLWQKFRDLSIEEYIRVYKRLGVYFDEYSGESFYREKSQEVLKLLESKGLLLRTIKGTAVVDLSGNGDPSSICTVMRSDGTSLYATRDLAAAIDRMDKYNFDTMIYVTDKGQKKHFQQVFQMLKIMGYDWAERCQHVPFGVVQGMKTRRGDVTFLEDVLNEIQLRMLQNMASIKTTKELKNPQETAERVGLAALIIQDFKGLLLSDYKFSWDRVFQSRGDTGVFLQYTHARLHSLEETFGCGYLNDFNTACLQEPQSVSILQHLLRFDEVLYKSSQDFQPRHIVSYLLTLSHLAAVAHKTLQIKDSPPEVAGARLHLFKAVRSVLANGMKLLGITPVCRM.

Residues 1–16 (MACGFRRAIACQLSRV) constitute a mitochondrion transit peptide. L-arginine-binding positions include 133 to 135 (SPN), His144, Tyr322, Asp326, and Gln350. Residues 133–144 (SPNVAKKFHVGH) carry the 'HIGH' region motif. At Lys568 the chain carries N6-acetyllysine.

It belongs to the class-I aminoacyl-tRNA synthetase family.

It is found in the mitochondrion membrane. The catalysed reaction is tRNA(Arg) + L-arginine + ATP = L-arginyl-tRNA(Arg) + AMP + diphosphate. Catalyzes the attachment of arginine to tRNA(Arg) in a two-step reaction: arginine is first activated by ATP to form Arg-AMP and then transferred to the acceptor end of tRNA(Arg). In Pongo abelii (Sumatran orangutan), this protein is Probable arginine--tRNA ligase, mitochondrial (RARS2).